Here is a 219-residue protein sequence, read N- to C-terminus: Thymidylate kinase (219 aa).

7–14 contacts ATP; the sequence is GIDGAGKS.

The protein belongs to the thymidylate kinase family.

The enzyme catalyses dTMP + ATP = dTDP + ADP. Functionally, phosphorylation of dTMP to form dTDP in both de novo and salvage pathways of dTTP synthesis. This Chlorobium limicola (strain DSM 245 / NBRC 103803 / 6330) protein is Thymidylate kinase.